The primary structure comprises 318 residues: Olfactory receptor 13C7 (318 aa).

At 1 to 27 the chain is on the extracellular side; sequence MVSANQTASVTEFILLGLSAHPKLEKT. Residues 28–48 traverse the membrane as a helical segment; sequence FFVLILLMYLVILLGNGVLIL. Residues 49–61 are Cytoplasmic-facing; that stretch reads MTVSNSHLHMPMY. Residues 62–82 form a helical membrane-spanning segment; sequence FFLGNLSFLDICYTTSSVPLI. At 83-100 the chain is on the extracellular side; sequence LDSFLTPRKTISFSACAV. The helical transmembrane segment at 101–121 threads the bilayer; it reads QMFLSFAMGATECVLLSMMAF. Residues 122–181 are Cytoplasmic-facing; that stretch reads DRYVAICNPLRYPVVMSKAAYMPKAAGSWVAGSTASMVQTSLAMRLPFCGDNIINHFTCE. Residues 182–202 form a helical membrane-spanning segment; it reads ILAVLKLACADISVNVISMGV. Residues 203–205 are Extracellular-facing; it reads TNV. The chain crosses the membrane as a helical span at residues 206–226; that stretch reads IFLGVPVLFISFSYVFIIATI. Topologically, residues 227 to 238 are cytoplasmic; it reads LRIPSAEGRKKA. The helical transmembrane segment at 239–259 threads the bilayer; it reads FSTCSAHLTVVVIFYGTILFM. The Extracellular segment spans residues 260 to 278; it reads YGKPKSKDPLGADKQDLAD. A helical membrane pass occupies residues 279–289; that stretch reads KLISLFYGVVT. Residues 290–318 lie on the Cytoplasmic side of the membrane; it reads PMLNPIIYSLRNKDVKAAVRDLIFQKCFA.

It belongs to the G-protein coupled receptor 1 family.

It localises to the cell membrane. Functionally, odorant receptor. The polypeptide is Olfactory receptor 13C7 (Homo sapiens (Human)).